A 279-amino-acid chain; its full sequence is Undecaprenyl-diphosphatase (279 aa).

A run of 8 helical transmembrane segments spans residues 2–22 (LIIE…TEWL), 44–64 (AFIE…VMLI), 85–105 (WQLW…AVPL), 113–133 (FYFM…FIWI), 163–183 (VLSI…AIIL), 188–208 (TVAA…YSGL), 223–243 (AQVL…LLAI), and 255–275 (FTIF…YSFF).

Belongs to the UppP family.

Its subcellular location is the cell membrane. The enzyme catalyses di-trans,octa-cis-undecaprenyl diphosphate + H2O = di-trans,octa-cis-undecaprenyl phosphate + phosphate + H(+). Catalyzes the dephosphorylation of undecaprenyl diphosphate (UPP). Confers resistance to bacitracin. The chain is Undecaprenyl-diphosphatase from Streptococcus pyogenes serotype M5 (strain Manfredo).